The following is a 196-amino-acid chain: ATP-dependent Clp protease proteolytic subunit (196 aa).

The active-site Nucleophile is serine 96. Histidine 121 is an active-site residue.

This sequence belongs to the peptidase S14 family. As to quaternary structure, fourteen ClpP subunits assemble into 2 heptameric rings which stack back to back to give a disk-like structure with a central cavity, resembling the structure of eukaryotic proteasomes.

It is found in the cytoplasm. The enzyme catalyses Hydrolysis of proteins to small peptides in the presence of ATP and magnesium. alpha-casein is the usual test substrate. In the absence of ATP, only oligopeptides shorter than five residues are hydrolyzed (such as succinyl-Leu-Tyr-|-NHMec, and Leu-Tyr-Leu-|-Tyr-Trp, in which cleavage of the -Tyr-|-Leu- and -Tyr-|-Trp bonds also occurs).. Functionally, cleaves peptides in various proteins in a process that requires ATP hydrolysis. Has a chymotrypsin-like activity. Plays a major role in the degradation of misfolded proteins. The polypeptide is ATP-dependent Clp protease proteolytic subunit (Streptococcus suis (strain 98HAH33)).